The following is a 66-amino-acid chain: Large ribosomal subunit protein uL29 (66 aa).

Belongs to the universal ribosomal protein uL29 family.

The protein is Large ribosomal subunit protein uL29 of Methylibium petroleiphilum (strain ATCC BAA-1232 / LMG 22953 / PM1).